The chain runs to 496 residues: uncharacterized protein (496 aa).

The N-terminal stretch at 1–19 (MTTGYILIAAILILGGVIA) is a signal peptide. Residues 45-67 (AVLVTILTGGLVSATTLAILFIA) form a helical membrane-spanning segment. Residues 113 to 137 (LETTRTDKKQVETQRDQAKKEKLKA) form a disordered region.

Its subcellular location is the membrane. This is an uncharacterized protein from Nostoc sp. (strain PCC 7120 / SAG 25.82 / UTEX 2576).